The following is an 83-amino-acid chain: Small ribosomal subunit protein eS21 (83 aa).

Belongs to the eukaryotic ribosomal protein eS21 family. As to quaternary structure, component of the 40S small ribosomal subunit.

It is found in the cytoplasm. Its subcellular location is the cytosol. The protein resides in the rough endoplasmic reticulum. Functionally, component of the small ribosomal subunit. The ribosome is a large ribonucleoprotein complex responsible for the synthesis of proteins in the cell. The sequence is that of Small ribosomal subunit protein eS21 (rps21) from Xenopus tropicalis (Western clawed frog).